The sequence spans 162 residues: Disulfide bond formation protein B (162 aa).

Residues M1 to A8 are Cytoplasmic-facing. The chain crosses the membrane as a helical span at residues V9–A25. Topologically, residues A26 to L43 are periplasmic. A disulfide bridge links C35 with C38. A helical membrane pass occupies residues C44–P60. The Cytoplasmic segment spans residues K61–L67. A helical transmembrane segment spans residues S68 to A85. At Y86–V141 the chain is on the periplasmic side. C101 and C128 are joined by a disulfide. A helical membrane pass occupies residues W142–R160. At A161–K162 the chain is on the cytoplasmic side.

The protein belongs to the DsbB family.

It localises to the cell inner membrane. Required for disulfide bond formation in some periplasmic proteins. Acts by oxidizing the DsbA protein. The protein is Disulfide bond formation protein B of Neisseria gonorrhoeae (strain ATCC 700825 / FA 1090).